Here is a 35-residue protein sequence, read N- to C-terminus: uncharacterized protein (35 aa).

Positions 1–18 (MRSLVFVQLSLLSWEIFC) are cleaved as a signal peptide.

This is an uncharacterized protein from Saccharomyces cerevisiae (strain ATCC 204508 / S288c) (Baker's yeast).